Reading from the N-terminus, the 489-residue chain is Serine/threonine-protein kinase BSK2 (489 aa).

The disordered stretch occupies residues 1-30; the sequence is MGCLHSKTANLPSSDDPSAPNKPESVNGDQ. G2 is lipidated: N-myristoyl glycine. Positions 7–16 are enriched in polar residues; sequence KTANLPSSDD. One can recognise a Protein kinase domain in the interval 56–322; that stretch reads SCIVSEGGEK…QEEVASHVLM (267 aa). Residues 62 to 70 and K84 contribute to the ATP site; that span reads GGEKAPNVV. Residue D178 is the Proton acceptor of the active site.

Belongs to the protein kinase superfamily. Ser/Thr protein kinase family. Post-translationally, phosphorylated by BRI1 upon brassinolide (BL) treatment.

Its subcellular location is the cell membrane. The catalysed reaction is L-seryl-[protein] + ATP = O-phospho-L-seryl-[protein] + ADP + H(+). The enzyme catalyses L-threonyl-[protein] + ATP = O-phospho-L-threonyl-[protein] + ADP + H(+). Functionally, probable serine/threonine kinase that acts as a positive regulator of brassinosteroid (BR) signaling downstream of the receptor kinase BRI1. Mediates signal transduction from BRI1 by functioning as substrate of BRI1. The chain is Serine/threonine-protein kinase BSK2 from Arabidopsis thaliana (Mouse-ear cress).